A 179-amino-acid polypeptide reads, in one-letter code: UPF0302 protein EF_1554 (179 aa).

Belongs to the UPF0302 family.

The polypeptide is UPF0302 protein EF_1554 (Enterococcus faecalis (strain ATCC 700802 / V583)).